A 485-amino-acid polypeptide reads, in one-letter code: MGFHQISVIIVVLALASARAADEFPSHTDTPTDCPEADHGCWCHGSFAQCWRTYEDSRMTEEIGNRITQLELLYQPSEEVVTYIRRISALRELRISEDGMSLDCSCDVIYALDDKQVTLVNQAELTFGNCRERGWPRERMAARPFVHRCHVLRMQDGETRKRRGADDNDGDDVSKRASPRKGDEPAGHKLKDLAPQNTHHLVNIHDADKHPASEFVNFISGHRRSRRSTDDDAAVSDDSERGARKKRYGNQGNYPQAMNPQSRGVNYGQPAQQGYGAQGMGGAFGGGQGMGGAVRGGQGMGGAVGGGQFGAFSPGEAEADNADYDEYSDSLDEGDTTISAAVMDDIKAVLGATKIDLPVDINDPYDLGLLLRHLRHHSNLLANIGDPAVREQVLSAMQEEEEEEEEDAANGVRQNVLNNINANAPGNAGYGGQGGMGAFGGGGGGMGAIGGGGGAMMGQQGMGGVPQRMGGQPQGNAYNQGYRQG.

The first 20 residues, 1–20 (MGFHQISVIIVVLALASARA), serve as a signal peptide directing secretion. Residues 21-247 (ADEFPSHTDT…DSERGARKKR (227 aa)) constitute a propeptide that is removed on maturation. 3 disordered regions span residues 157–195 (GETRKRRGADDNDGDDVSKRASPRKGDEPAGHKLKDLAP), 219–273 (ISGH…PAQQ), and 305–331 (GGGQFGAFSPGEAEADNADYDEYSDSL). A compositionally biased stretch (basic and acidic residues) spans 172 to 192 (DVSKRASPRKGDEPAGHKLKD). Positions 250–264 (NQGNYPQAMNPQSRG) are enriched in polar residues. The segment covering 317–331 (AEADNADYDEYSDSL) has biased composition (acidic residues). The segment at 371–379 (LRHLRHHSN) is fucose-binding domain. The tract at residues 459–485 (QQGMGGVPQRMGGQPQGNAYNQGYRQG) is disordered. Low complexity predominate over residues 465–475 (VPQRMGGQPQG). The segment covering 476 to 485 (NAYNQGYRQG) has biased composition (polar residues).

The protein belongs to the bindin family.

It is found in the cytoplasmic vesicle. Its subcellular location is the secretory vesicle. The protein resides in the acrosome lumen. Species-specific sea urchin sperm protein required for adhesion of sperm to the egg surface during fertilization. Bindin coats the acrosomal process after it is externalized by the acrosome reaction. It binds to sulfated, fucose-containing polysaccharides on the vitelline layer receptor proteoglycans which cover the egg plasma membrane. In Mesocentrotus franciscanus (Giant red sea urchin), this protein is Bindin.